A 99-amino-acid chain; its full sequence is UPF0235 protein AHA_3661 (99 aa).

Belongs to the UPF0235 family.

The protein is UPF0235 protein AHA_3661 of Aeromonas hydrophila subsp. hydrophila (strain ATCC 7966 / DSM 30187 / BCRC 13018 / CCUG 14551 / JCM 1027 / KCTC 2358 / NCIMB 9240 / NCTC 8049).